Here is a 423-residue protein sequence, read N- to C-terminus: Kynureninase (423 aa).

Residues L105, S106, 133–136 (FPSD), D218, H221, and Y243 contribute to the pyridoxal 5'-phosphate site. K244 bears the N6-(pyridoxal phosphate)lysine mark. Positions 273 and 301 each coordinate pyridoxal 5'-phosphate.

It belongs to the kynureninase family. As to quaternary structure, homodimer. The cofactor is pyridoxal 5'-phosphate.

It catalyses the reaction L-kynurenine + H2O = anthranilate + L-alanine + H(+). The catalysed reaction is 3-hydroxy-L-kynurenine + H2O = 3-hydroxyanthranilate + L-alanine + H(+). Its pathway is amino-acid degradation; L-kynurenine degradation; L-alanine and anthranilate from L-kynurenine: step 1/1. The protein operates within cofactor biosynthesis; NAD(+) biosynthesis; quinolinate from L-kynurenine: step 2/3. Catalyzes the cleavage of L-kynurenine (L-Kyn) and L-3-hydroxykynurenine (L-3OHKyn) into anthranilic acid (AA) and 3-hydroxyanthranilic acid (3-OHAA), respectively. The chain is Kynureninase from Xanthomonas oryzae pv. oryzae (strain MAFF 311018).